The following is a 1238-amino-acid chain: MSSKRRNKNNKNNNKNNNKNNDNNNNIEQQDDIEDISSGDIDTTNLIIDEIEDVYDDYDNEQIKNSLNHSFSNKNNTSLNNSINLSMSLIEVEETELDISSTIRPWELNIFGSLGSSGGGISSTPISQLSPFKTPSPPSSSSSSSQSPLRKPRPSFLDSFRSQFNITNINNKNNNNNNNTTSNFNTSNILNTSNFRNTNIGINNSANNNRNISRNSLPVTFSQITPIKPKNNKQIDSQSQIKPQSQSQSQSQTQSQIQEVQFSQSESQSQTQTQSQNEEKIGFRLPSPLSPIKNIESEQKKASTTSMSYESIEKSQELQNQTQINKSKQDLTNISQKINITTSQHDKDDLGEYRMSEKGGGDDGDDDDDYDNQDEKDNNYNKTNKKQQQQHHHKGKEESQSEYYEKEKEKEKEDIATTRATTTTKSTDNSNNNINKNKEFNENDLQPWLLDALLTQTAPDYPIIQIIKHYDRKEDINMDGIRRKEYQDGSSFLVSDGVNFMIAILPTSVARDLIVSEGTRKIYHEMVGFIIEVQRYVLFPNSKYSGFELFIGNAKFIDKTNEPINFHNLKGVISSSTKLKEVIKRMSHENYWTASSPTEYSNKFFPQNVSNSHHYQITQHETIISQDQLDSLNNLSDWEKHEQPNKLYQFNIYKTNFRHKNKLKQQQQQQEQQEKENQQQQQQKQQQQQQEEQLKEQQEEQQQNQQEEEKQQPSQRQSQQNQQSQQNQQSQQNQQSQQTQQVSQKHQHSQGSQQNQQSQLLQKHQQSQGSQQRQQSQEKQQSQEKQQSQEKQQSQEKHQSQEKHQSQQSQEKQQSQKKQQSQQSQASQQKYQQSQGSQEKQQSQEKQQQQQQQISSQQKGLPKINDDEEYDDTILESFENYSQSQSDLSQQFLSQSQSQSQSQSQRQSKKRKEREENQDSENLDDTVDMNYNQIPSTLDHSTLQGHKFSMYDNTSYYSNQEQEEREIERRRRELAGEDSDEEFEILDEDQVGIGLTHDNDNDNDDEENSYTPTGAATISFLDQNIISGNSGVDESKIPKVFNKNNFDTIKEEEDDEEEKEQQNNNNNINSNSKNNNVNNKLNSQEYDDTFKDTAWIPKKSGKDKFDQSSSSTNFYSSNKKNVPQPTKSVNKPRSTALKKGASQNRQKQSEQQQQQPQQQPQLPQQQQQQQQQQQLRQQQNENTISSLNASRPITKSAPLKYIKRDLTFEEIVKRNKLIRKSREEKMEMWKQHNNIIDD.

6 disordered regions span residues 1-38 (MSSK…DISS), 122-156 (SSTP…RPSF), 229-439 (PKNN…KNKE), 660-1016 (KNKL…TGAA), 1051-1083 (EEED…KLNS), and 1098-1191 (KKSG…NASR). Composition is skewed to low complexity over residues 10–26 (NKNN…NNNN), 129–149 (LSPF…QSPL), and 234–276 (QIDS…TQSQ). Positions 317-343 (ELQNQTQINKSKQDLTNISQKINITTS) are enriched in polar residues. The segment covering 344 to 361 (QHDKDDLGEYRMSEKGGG) has biased composition (basic and acidic residues). The segment covering 362–372 (DDGDDDDDYDN) has biased composition (acidic residues). Residues 383 to 394 (TNKKQQQQHHHK) show a composition bias toward basic residues. Basic and acidic residues predominate over residues 395 to 416 (GKEESQSEYYEKEKEKEKEDIA). 3 stretches are compositionally biased toward low complexity: residues 417–435 (TTRA…NNIN), 678–691 (QQQQ…QQQE), and 712–792 (QPSQ…QEKQ). Positions 793 to 805 (QSQEKHQSQEKHQ) are enriched in basic and acidic residues. Composition is skewed to low complexity over residues 806–859 (SQQS…SQQK) and 882–906 (SQSQ…QSQR). Residues 916–927 (ENQDSENLDDTV) are compositionally biased toward acidic residues. A compositionally biased stretch (polar residues) spans 929–944 (MNYNQIPSTLDHSTLQ). The span at 966 to 975 (EIERRRRELA) shows a compositional bias: basic and acidic residues. Residues 976–990 (GEDSDEEFEILDEDQ) show a composition bias toward acidic residues. 2 stretches are compositionally biased toward low complexity: residues 1062 to 1083 (QNNN…KLNS) and 1108 to 1121 (SSSS…NKKN). The segment covering 1123-1133 (PQPTKSVNKPR) has biased composition (polar residues). Residues 1142 to 1181 (SQNRQKQSEQQQQQPQQQPQLPQQQQQQQQQQQLRQQQNE) show a composition bias toward low complexity. Residues 1182–1191 (NTISSLNASR) show a composition bias toward polar residues.

This is an uncharacterized protein from Dictyostelium discoideum (Social amoeba).